Consider the following 425-residue polypeptide: Glucan 1,3-beta-glucosidase (425 aa).

Positions 1-19 (MNLTLLLLALIFSPSLIFS) are cleaved as a signal peptide. Residue Glu219 is the Proton donor of the active site. Disulfide bonds link Cys301-Cys423 and Cys326-Cys352. Catalysis depends on Glu318, which acts as the Nucleophile.

It belongs to the glycosyl hydrolase 5 (cellulase A) family.

The protein resides in the secreted. It catalyses the reaction Successive hydrolysis of beta-D-glucose units from the non-reducing ends of (1-&gt;3)-beta-D-glucans, releasing alpha-glucose.. In terms of biological role, beta-glucanases participate in the metabolism of beta-glucan, the main structural component of the cell wall. It could also function biosynthetically as a transglycosylase. In Schwanniomyces occidentalis (Yeast), this protein is Glucan 1,3-beta-glucosidase.